A 578-amino-acid polypeptide reads, in one-letter code: Glucans biosynthesis protein G (578 aa).

The signal sequence occupies residues 1–37; the sequence is MIVSPCIAPRIPGTRLRKAMLAGVALVGLLSAGQLWA. The disordered stretch occupies residues 511–578; the sequence is VPVEAPKPAK…TWSYQLPADE (68 aa). A compositionally biased stretch (basic and acidic residues) spans 517–543; that stretch reads KPAKDSKQDKAAAKHAHAKAEKAKAEQ. A compositionally biased stretch (low complexity) spans 544-554; it reads PAEQPAADAAS.

Belongs to the OpgD/OpgG family.

Its subcellular location is the periplasm. Its pathway is glycan metabolism; osmoregulated periplasmic glucan (OPG) biosynthesis. Functionally, involved in the biosynthesis of osmoregulated periplasmic glucans (OPGs). This is Glucans biosynthesis protein G from Pseudomonas entomophila (strain L48).